A 426-amino-acid polypeptide reads, in one-letter code: Putative phosphate permease CPn_0680/CP_0067/CPj0680/CpB0707 (426 aa).

11 helical membrane passes run 1-21, 42-62, 87-107, 112-132, 137-157, 180-200, 207-227, 260-280, 313-333, 364-384, and 399-419; these read MLPLIIFVLLCGFYTSWNIGA, AVVIAAIFEFFGALLLGDRVA, TAALLATGVWLQLASFFGWPV, SIVGAVIGFGLVLGKGTIIYW, IILISWILSPFMGGCVAYLIF, FLAALVIMTLGTVMISGGVIL, WAVSGVLVCGLLSYIITFYYV, LVVERIFAYLQIIVACFMAFA, LMAFGGIGLVIGLAIWGWRVI, ILGLPISTTHVVVGAVLGIGL, and IVLSWFITLPAGALLSILFFF.

This sequence belongs to the inorganic phosphate transporter (PiT) (TC 2.A.20) family.

Its subcellular location is the cell membrane. Its function is as follows. Potential transporter for phosphate. The protein is Putative phosphate permease CPn_0680/CP_0067/CPj0680/CpB0707 of Chlamydia pneumoniae (Chlamydophila pneumoniae).